A 397-amino-acid polypeptide reads, in one-letter code: Serine protease MT3772 (397 aa).

A run of 4 helical transmembrane segments spans residues 9-29 (IAVLAVAFIAAISGWRAGALG), 32-52 (LSFGGVLLGATAGVLLAPHIV), 62-82 (LFAALFLILALVVVGEVAGVV), and 102-122 (VIGVGVQLVVVLTAAWLLAMP). Cys-214 and Cys-395 are disulfide-bonded. The Proton acceptor role is filled by His-235. Asp-264 is an active-site residue. Ser-343 acts as the Charge relay system in catalysis.

It belongs to the peptidase S1C family. As to quaternary structure, monomer.

Its subcellular location is the membrane. Required for M.tuberculosis resistance to oxidative stress in addition to its role in resistance to acid, which is essential for virulence. The polypeptide is Serine protease MT3772 (Mycobacterium tuberculosis (strain CDC 1551 / Oshkosh)).